Here is a 339-residue protein sequence, read N- to C-terminus: tRNA N6-adenosine threonylcarbamoyltransferase (339 aa).

2 residues coordinate Fe cation: His-111 and His-115. Substrate is bound by residues Leu-139–Gly-143, Asp-172, Gly-185, Asp-189, and Asn-280. Asp-308 contacts Fe cation.

Belongs to the KAE1 / TsaD family. It depends on Fe(2+) as a cofactor.

It localises to the cytoplasm. The catalysed reaction is L-threonylcarbamoyladenylate + adenosine(37) in tRNA = N(6)-L-threonylcarbamoyladenosine(37) in tRNA + AMP + H(+). In terms of biological role, required for the formation of a threonylcarbamoyl group on adenosine at position 37 (t(6)A37) in tRNAs that read codons beginning with adenine. Is involved in the transfer of the threonylcarbamoyl moiety of threonylcarbamoyl-AMP (TC-AMP) to the N6 group of A37, together with TsaE and TsaB. TsaD likely plays a direct catalytic role in this reaction. This Bacteroides fragilis (strain ATCC 25285 / DSM 2151 / CCUG 4856 / JCM 11019 / LMG 10263 / NCTC 9343 / Onslow / VPI 2553 / EN-2) protein is tRNA N6-adenosine threonylcarbamoyltransferase.